We begin with the raw amino-acid sequence, 1460 residues long: DNA-directed RNA polymerase III subunit RPC1 (1460 aa).

Zn(2+) contacts are provided by cysteine 67, cysteine 70, cysteine 77, histidine 80, cysteine 107, cysteine 110, and cysteine 154. Mg(2+) contacts are provided by aspartate 511, aspartate 513, and aspartate 515. Positions 858-870 (PPEFLFHAISGRE) are bridging helix.

The protein belongs to the RNA polymerase beta' chain family. As to quaternary structure, component of the RNA polymerase III (Pol III) complex consisting of 17 subunits.

It localises to the nucleus. The enzyme catalyses RNA(n) + a ribonucleoside 5'-triphosphate = RNA(n+1) + diphosphate. DNA-dependent RNA polymerase catalyzes the transcription of DNA into RNA using the four ribonucleoside triphosphates as substrates. Largest and catalytic core component of RNA polymerase III which synthesizes small RNAs, such as 5S rRNA and tRNAs. Forms the polymerase active center together with the second largest subunit. A single-stranded DNA template strand of the promoter is positioned within the central active site cleft of Pol III. A bridging helix emanates from RPC1 and crosses the cleft near the catalytic site and is thought to promote translocation of Pol III by acting as a ratchet that moves the RNA-DNA hybrid through the active site by switching from straight to bent conformations at each step of nucleotide addition. This Saccharomyces cerevisiae (strain ATCC 204508 / S288c) (Baker's yeast) protein is DNA-directed RNA polymerase III subunit RPC1 (RPO31).